The chain runs to 309 residues: ATP synthase gamma chain (309 aa).

The protein belongs to the ATPase gamma chain family. As to quaternary structure, F-type ATPases have 2 components, CF(1) - the catalytic core - and CF(0) - the membrane proton channel. CF(1) has five subunits: alpha(3), beta(3), gamma(1), delta(1), epsilon(1). CF(0) has three main subunits: a, b and c.

The protein localises to the cell membrane. Its function is as follows. Produces ATP from ADP in the presence of a proton gradient across the membrane. The gamma chain is believed to be important in regulating ATPase activity and the flow of protons through the CF(0) complex. This Mycobacterium sp. (strain JLS) protein is ATP synthase gamma chain.